The primary structure comprises 378 residues: Erythronate-4-phosphate dehydrogenase (378 aa).

Ser-45 and Thr-66 together coordinate substrate. Positions 146 and 175 each coordinate NAD(+). Arg-208 is a catalytic residue. NAD(+) is bound at residue Asp-232. The active site involves Glu-237. His-254 acts as the Proton donor in catalysis. NAD(+) is bound at residue Gly-257. Tyr-258 is a binding site for substrate.

This sequence belongs to the D-isomer specific 2-hydroxyacid dehydrogenase family. PdxB subfamily. Homodimer.

Its subcellular location is the cytoplasm. It catalyses the reaction 4-phospho-D-erythronate + NAD(+) = (R)-3-hydroxy-2-oxo-4-phosphooxybutanoate + NADH + H(+). It participates in cofactor biosynthesis; pyridoxine 5'-phosphate biosynthesis; pyridoxine 5'-phosphate from D-erythrose 4-phosphate: step 2/5. Catalyzes the oxidation of erythronate-4-phosphate to 3-hydroxy-2-oxo-4-phosphonooxybutanoate. This is Erythronate-4-phosphate dehydrogenase from Salmonella paratyphi A (strain ATCC 9150 / SARB42).